A 58-amino-acid chain; its full sequence is UPF0337 protein CE1672 (58 aa).

A compositionally biased stretch (basic and acidic residues) spans 1–39 (MGLGDKIRNTAEKASGKVKEATGKATDNEKLEAEGKTDQ). Residues 1-58 (MGLGDKIRNTAEKASGKVKEATGKATDNEKLEAEGKTDQFKGNAKNTVENAKDTLRGN) are disordered.

Belongs to the UPF0337 (CsbD) family.

In Corynebacterium efficiens (strain DSM 44549 / YS-314 / AJ 12310 / JCM 11189 / NBRC 100395), this protein is UPF0337 protein CE1672.